The sequence spans 81 residues: MSHAVKIYDTCIGCTQCVRACPLDVLEMVPWDGHKSGQIAASPRTEDCVGCKRCETACPTHFLSIRVYLGDETTRSMGLAY.

4Fe-4S ferredoxin-type domains lie at 2–31 and 39–68; these read SHAVKIYDTCIGCTQCVRACPLDVLEMVPW and IAASPRTEDCVGCKRCETACPTHFLSIRVY. Positions 11, 14, 17, 21, 48, 51, 54, and 58 each coordinate [4Fe-4S] cluster.

The cyanobacterial PSI reaction center is composed of one copy each of PsaA,B,C,D,E,F,I,J,K,L,M and X, and forms trimeric complexes. [4Fe-4S] cluster serves as cofactor.

The protein resides in the cellular thylakoid membrane. The enzyme catalyses reduced [plastocyanin] + hnu + oxidized [2Fe-2S]-[ferredoxin] = oxidized [plastocyanin] + reduced [2Fe-2S]-[ferredoxin]. In terms of biological role, apoprotein for the two 4Fe-4S centers FA and FB of photosystem I (PSI); essential for photochemical activity. FB is the terminal electron acceptor of PSI, donating electrons to ferredoxin. The C-terminus interacts with PsaA/B/D and helps assemble the protein into the PSI complex. Required for binding of PsaD and PsaE to PSI. PSI is a plastocyanin/cytochrome c6-ferredoxin oxidoreductase, converting photonic excitation into a charge separation, which transfers an electron from the donor P700 chlorophyll pair to the spectroscopically characterized acceptors A0, A1, FX, FA and FB in turn. The chain is Photosystem I iron-sulfur center from Prochlorococcus marinus (strain MIT 9313).